A 310-amino-acid chain; its full sequence is Coproporphyrin III ferrochelatase (310 aa).

A Fe-coproporphyrin III-binding site is contributed by Tyr-13. Tyr-13 is an N-methylmesoporphyrin binding site. Residue Glu-20 participates in Mg(2+) binding. Arg-30 provides a ligand contact to Fe-coproporphyrin III. 31–33 serves as a coordination point for N-methylmesoporphyrin; it reads RGR. Arg-46 contacts Mg(2+). Residues 46 to 47, Ser-54, and Tyr-125 contribute to the Fe-coproporphyrin III site; that span reads RY. 2 residues coordinate N-methylmesoporphyrin: His-183 and Lys-188. Residue His-183 participates in Fe(2+) binding. Residue Glu-264 participates in Fe(2+) binding. Asp-268 and Glu-272 together coordinate Mg(2+).

Belongs to the ferrochelatase family. Monomer. Interacts with frataxin/Fra.

It is found in the cytoplasm. It catalyses the reaction Fe-coproporphyrin III + 2 H(+) = coproporphyrin III + Fe(2+). The protein operates within porphyrin-containing compound metabolism; protoheme biosynthesis. With respect to regulation, stimulated by Mg(2+). Inhibited by Cd(2+). Inhibited by N-methylmesoporphyrin (N-MeMP) and 2,4-disulfonic acid deuteroporphyrin IX (dSDP). Involved in coproporphyrin-dependent heme b biosynthesis. Catalyzes the insertion of ferrous iron into coproporphyrin III to form Fe-coproporphyrin III. It can also insert iron into protoporphyrin IX. Has weaker activity with 2,4 disulfonate, deuteroporphyrin and 2,4 hydroxyethyl. In vitro, can also use Zn(2+) or Cu(2+). The protein is Coproporphyrin III ferrochelatase of Bacillus subtilis (strain 168).